The chain runs to 347 residues: NADH-ubiquinone oxidoreductase chain 2 (347 aa).

10 consecutive transmembrane segments (helical) span residues 13–33 (VFTG…WLGL), 55–75 (AAIK…MAIL), 96–116 (LMIV…FWVP), 122–142 (VPLT…ISIM), 151–171 (TNIL…GGLN), 178–198 (ILAY…PYNP), 199–219 (NITI…FLIL), 237–257 (LTWL…LPPL), 277–297 (IAPT…ARLI), and 326–346 (LPTL…ILSI).

Belongs to the complex I subunit 2 family. Core subunit of respiratory chain NADH dehydrogenase (Complex I) which is composed of 45 different subunits. Interacts with TMEM242.

It is found in the mitochondrion inner membrane. The catalysed reaction is a ubiquinone + NADH + 5 H(+)(in) = a ubiquinol + NAD(+) + 4 H(+)(out). Core subunit of the mitochondrial membrane respiratory chain NADH dehydrogenase (Complex I) which catalyzes electron transfer from NADH through the respiratory chain, using ubiquinone as an electron acceptor. Essential for the catalytic activity and assembly of complex I. The polypeptide is NADH-ubiquinone oxidoreductase chain 2 (Pongo pygmaeus (Bornean orangutan)).